The following is a 227-amino-acid chain: 3,4-dihydroxy-2-butanone 4-phosphate synthase (227 aa).

D-ribulose 5-phosphate contacts are provided by residues 45 to 46, Asp-50, 158 to 162, and Glu-182; these read RE and RRGHT. Glu-46 provides a ligand contact to Mg(2+). Mg(2+) is bound at residue His-161.

The protein belongs to the DHBP synthase family. As to quaternary structure, homodimer. Mg(2+) is required as a cofactor. The cofactor is Mn(2+).

It carries out the reaction D-ribulose 5-phosphate = (2S)-2-hydroxy-3-oxobutyl phosphate + formate + H(+). Its pathway is cofactor biosynthesis; riboflavin biosynthesis; 2-hydroxy-3-oxobutyl phosphate from D-ribulose 5-phosphate: step 1/1. Its function is as follows. Catalyzes the conversion of D-ribulose 5-phosphate to formate and 3,4-dihydroxy-2-butanone 4-phosphate. This chain is 3,4-dihydroxy-2-butanone 4-phosphate synthase, found in Ralstonia nicotianae (strain ATCC BAA-1114 / GMI1000) (Ralstonia solanacearum).